A 65-amino-acid chain; its full sequence is uncharacterized protein (65 aa).

This is an uncharacterized protein from Dictyostelium discoideum (Social amoeba).